Here is a 196-residue protein sequence, read N- to C-terminus: Probable nicotinate-nucleotide adenylyltransferase (196 aa).

This sequence belongs to the NadD family.

It catalyses the reaction nicotinate beta-D-ribonucleotide + ATP + H(+) = deamido-NAD(+) + diphosphate. Its pathway is cofactor biosynthesis; NAD(+) biosynthesis; deamido-NAD(+) from nicotinate D-ribonucleotide: step 1/1. Catalyzes the reversible adenylation of nicotinate mononucleotide (NaMN) to nicotinic acid adenine dinucleotide (NaAD). This Caldicellulosiruptor bescii (strain ATCC BAA-1888 / DSM 6725 / KCTC 15123 / Z-1320) (Anaerocellum thermophilum) protein is Probable nicotinate-nucleotide adenylyltransferase.